The sequence spans 355 residues: MLEKLDSLEEKYDELTHLLSQPEVLSDQARFQKLAKAHSALSDIVTMYREYKSLSRQLEDSKEMLVEEEDEEFRQMLADEIPQLQEKKASLEQELRILLLPQDPNDEKSVIMEIRAGTGGEEAALFAGDLFRMYSRYAEEQGWKIEIMDTHYTDIGGIKEIVFVVDGRGAYSKLKFESGVHRVQRIPVTESGGRIHTSAATVAVLPEAEEVEVAIDPNDLRIDVYCSSGPGGQSVNTTQSAVRITHVPTGEVVTCQDEKSQHKNKAKALRVLRARLKELLEEEKNAEMAGTRKNQVGSGDRSERIRTYNFPQGRVSDHRINLTLHRLESVLEGRLEEIINALIAHYQAERLKQVD.

Gln233 is subject to N5-methylglutamine.

This sequence belongs to the prokaryotic/mitochondrial release factor family. In terms of processing, methylated by PrmC. Methylation increases the termination efficiency of RF1.

Its subcellular location is the cytoplasm. Functionally, peptide chain release factor 1 directs the termination of translation in response to the peptide chain termination codons UAG and UAA. The sequence is that of Peptide chain release factor 1 from Syntrophomonas wolfei subsp. wolfei (strain DSM 2245B / Goettingen).